A 536-amino-acid chain; its full sequence is Nucleosome assembly protein 1-like 3 (536 aa).

2 disordered regions span residues 1–104 (MAEA…DKLP) and 160–338 (PTEE…KEDP). A compositionally biased stretch (low complexity) spans 35–75 (SNSSSSTTSCGSTGSSSSSSSSSSSSSSSSSGSSGSSSNGS). Over residues 77-95 (LHQKKRVPGPSRRAQRRPS) the composition is skewed to basic residues. Acidic residues predominate over residues 160 to 184 (PTEEECEWNSEEEFSGDEEMQDDTP). Basic and acidic residues-rich tracts occupy residues 199–220 (GKEN…PEAK) and 227–269 (PKET…KTDS). The span at 287–300 (TQANAEYTDQPTED) shows a compositional bias: polar residues. The span at 306-324 (PVREAQKRVPETRPEERVN) shows a compositional bias: basic and acidic residues.

This sequence belongs to the nucleosome assembly protein (NAP) family.

It localises to the nucleus. In Rattus norvegicus (Rat), this protein is Nucleosome assembly protein 1-like 3 (Nap1l3).